The following is a 702-amino-acid chain: Elongation factor G (702 aa).

A tr-type G domain is found at 8–290 (HRVRNIGIAA…AVAMYLPAPT (283 aa)). GTP contacts are provided by residues 17 to 24 (AHIDAGKT), 87 to 91 (DTPGH), and 141 to 144 (NKMD).

It belongs to the TRAFAC class translation factor GTPase superfamily. Classic translation factor GTPase family. EF-G/EF-2 subfamily.

Its subcellular location is the cytoplasm. Its function is as follows. Catalyzes the GTP-dependent ribosomal translocation step during translation elongation. During this step, the ribosome changes from the pre-translocational (PRE) to the post-translocational (POST) state as the newly formed A-site-bound peptidyl-tRNA and P-site-bound deacylated tRNA move to the P and E sites, respectively. Catalyzes the coordinated movement of the two tRNA molecules, the mRNA and conformational changes in the ribosome. The polypeptide is Elongation factor G (Aliarcobacter butzleri (strain RM4018) (Arcobacter butzleri)).